The chain runs to 451 residues: tRNA modification GTPase MnmE (451 aa).

(6S)-5-formyl-5,6,7,8-tetrahydrofolate-binding residues include Arg28, Glu85, and Lys124. One can recognise a TrmE-type G domain in the interval 220–377 (GMNVVLVGQP…LRSELLRVAG (158 aa)). Asn230 contacts K(+). Residues 230-235 (NVGKSS), 249-255 (TDIAGTT), and 274-277 (DTAG) contribute to the GTP site. Mg(2+) is bound at residue Ser234. Residues Thr249, Ile251, and Thr254 each coordinate K(+). Residue Thr255 coordinates Mg(2+). Residue Lys451 coordinates (6S)-5-formyl-5,6,7,8-tetrahydrofolate.

It belongs to the TRAFAC class TrmE-Era-EngA-EngB-Septin-like GTPase superfamily. TrmE GTPase family. Homodimer. Heterotetramer of two MnmE and two MnmG subunits. The cofactor is K(+).

The protein resides in the cytoplasm. In terms of biological role, exhibits a very high intrinsic GTPase hydrolysis rate. Involved in the addition of a carboxymethylaminomethyl (cmnm) group at the wobble position (U34) of certain tRNAs, forming tRNA-cmnm(5)s(2)U34. The protein is tRNA modification GTPase MnmE of Aromatoleum aromaticum (strain DSM 19018 / LMG 30748 / EbN1) (Azoarcus sp. (strain EbN1)).